The chain runs to 95 residues: Hiracin-JM79 immunity factor (95 aa).

In terms of biological role, imparts immunity to bacteriocin hiracin-JM79 to naturally sensitive host strains. The polypeptide is Hiracin-JM79 immunity factor (Enterococcus hirae).